A 167-amino-acid polypeptide reads, in one-letter code: Small ribosomal subunit protein uS5 (167 aa).

One can recognise an S5 DRBM domain in the interval 11–74; the sequence is LQEKLIAVNR…EKARRNMINV (64 aa).

Belongs to the universal ribosomal protein uS5 family. Part of the 30S ribosomal subunit. Contacts proteins S4 and S8.

In terms of biological role, with S4 and S12 plays an important role in translational accuracy. Functionally, located at the back of the 30S subunit body where it stabilizes the conformation of the head with respect to the body. This is Small ribosomal subunit protein uS5 from Escherichia coli O139:H28 (strain E24377A / ETEC).